The primary structure comprises 283 residues: Phosphatidylglycerol--prolipoprotein diacylglyceryl transferase (283 aa).

7 helical membrane passes run Leu21–Ala41, Leu60–Tyr80, Val95–Trp115, Phe124–Leu144, Ser176–Ile196, Gly203–Val223, and Met239–Phe259. Residue Arg143 participates in a 1,2-diacyl-sn-glycero-3-phospho-(1'-sn-glycerol) binding.

Belongs to the Lgt family.

The protein localises to the cell inner membrane. It catalyses the reaction L-cysteinyl-[prolipoprotein] + a 1,2-diacyl-sn-glycero-3-phospho-(1'-sn-glycerol) = an S-1,2-diacyl-sn-glyceryl-L-cysteinyl-[prolipoprotein] + sn-glycerol 1-phosphate + H(+). The protein operates within protein modification; lipoprotein biosynthesis (diacylglyceryl transfer). In terms of biological role, catalyzes the transfer of the diacylglyceryl group from phosphatidylglycerol to the sulfhydryl group of the N-terminal cysteine of a prolipoprotein, the first step in the formation of mature lipoproteins. This Aliivibrio fischeri (strain MJ11) (Vibrio fischeri) protein is Phosphatidylglycerol--prolipoprotein diacylglyceryl transferase.